The primary structure comprises 1117 residues: Lid2 complex component snt2 (1117 aa).

In terms of domain architecture, BAH spans 89-208 (ELIQPNDFVL…QNINKVFDVV (120 aa)). The segment at 227-282 (NYDFIVTEYGKGRALLNEPSNCKVCKKWCAFDFSVQCADCKKYYHMDCVVPPLLKK) adopts a Phorbol-ester/DAG-type zinc-finger fold. The segment at 245 to 297 (PSNCKVCKKWCAFDFSVQCADCKKYYHMDCVVPPLLKKPPHGFGWTCATCSFA) adopts a PHD-type 1 zinc-finger fold. Residues 361–380 (SSRNLHQQSRKSLDENKPNS) form a disordered region. A PHD-type 2 zinc finger spans residues 798–882 (KKCCALCGIV…SWACLSCRSN (85 aa)). A C2HC pre-PHD-type zinc finger spans residues 890-925 (DNHCVLCLQSASHSLMKKTVEGNWVHLICASWTPDV). The PHD-type 3; degenerate zinc-finger motif lies at 948-1002 (KKCEVCGNSFGVCVSSPNSGLTSHVTCAEKANWYLGFEFVKQDQSPFSMLSNLKS).

As to quaternary structure, component of the Lid2 complex composed of ash2, jmj3, lid2, sdc1 and snt2.

It is found in the nucleus. This chain is Lid2 complex component snt2 (snt2), found in Schizosaccharomyces pombe (strain 972 / ATCC 24843) (Fission yeast).